Here is a 95-residue protein sequence, read N- to C-terminus: Exodeoxyribonuclease 7 small subunit (95 aa).

The segment at E65–S95 is disordered.

Belongs to the XseB family. As to quaternary structure, heterooligomer composed of large and small subunits.

Its subcellular location is the cytoplasm. The catalysed reaction is Exonucleolytic cleavage in either 5'- to 3'- or 3'- to 5'-direction to yield nucleoside 5'-phosphates.. In terms of biological role, bidirectionally degrades single-stranded DNA into large acid-insoluble oligonucleotides, which are then degraded further into small acid-soluble oligonucleotides. The sequence is that of Exodeoxyribonuclease 7 small subunit from Chlorobaculum tepidum (strain ATCC 49652 / DSM 12025 / NBRC 103806 / TLS) (Chlorobium tepidum).